Reading from the N-terminus, the 545-residue chain is CTP synthase (545 aa).

An amidoligase domain region spans residues 1–266 (MTTNYIFVTG…DDYICKRFSL (266 aa)). CTP is bound at residue Ser-14. Ser-14 lines the UTP pocket. ATP is bound by residues 15–20 (SLGKGI) and Asp-72. Mg(2+) contacts are provided by Asp-72 and Glu-140. CTP contacts are provided by residues 147–149 (DIE), 187–192 (KTKPTQ), and Lys-223. UTP contacts are provided by residues 187-192 (KTKPTQ) and Lys-223. An ATP-binding site is contributed by 239–241 (KDV). The region spanning 291–542 (TIGMIGKYVE…VKAAGEYQKR (252 aa)) is the Glutamine amidotransferase type-1 domain. Residue Gly-352 coordinates L-glutamine. Cys-379 (nucleophile; for glutamine hydrolysis) is an active-site residue. Residues 380–383 (LGMQ), Glu-403, and Arg-470 contribute to the L-glutamine site. Active-site residues include His-515 and Glu-517.

Belongs to the CTP synthase family. As to quaternary structure, homotetramer.

The catalysed reaction is UTP + L-glutamine + ATP + H2O = CTP + L-glutamate + ADP + phosphate + 2 H(+). The enzyme catalyses L-glutamine + H2O = L-glutamate + NH4(+). It catalyses the reaction UTP + NH4(+) + ATP = CTP + ADP + phosphate + 2 H(+). The protein operates within pyrimidine metabolism; CTP biosynthesis via de novo pathway; CTP from UDP: step 2/2. With respect to regulation, allosterically activated by GTP, when glutamine is the substrate; GTP has no effect on the reaction when ammonia is the substrate. The allosteric effector GTP functions by stabilizing the protein conformation that binds the tetrahedral intermediate(s) formed during glutamine hydrolysis. Inhibited by the product CTP, via allosteric rather than competitive inhibition. Functionally, catalyzes the ATP-dependent amination of UTP to CTP with either L-glutamine or ammonia as the source of nitrogen. Regulates intracellular CTP levels through interactions with the four ribonucleotide triphosphates. The chain is CTP synthase from Yersinia enterocolitica serotype O:8 / biotype 1B (strain NCTC 13174 / 8081).